Here is a 2299-residue protein sequence, read N- to C-terminus: Acetyl-CoA carboxylase dmxL1 (2299 aa).

Residues 21-39 are compositionally biased toward low complexity; that stretch reads TSIPASVPASAPPSSSAPH. The interval 21–41 is disordered; the sequence is TSIPASVPASAPPSSSAPHAA. Residues 75 to 583 form the Biotin carboxylation domain; sequence VITNVLIANN…TTGWLDELIT (509 aa). One can recognise an ATP-grasp 1 domain in the interval 227-424; the sequence is QVAIDADGIV…LPAAQLQIAM (198 aa). ATP is bound at residue 258 to 315; that stretch reads AKEIGFPVMIKASEGGGGKGIRKCEQEEGFEALYNAASSEIPGSPIFIMKLAGNARHL. Mg(2+) is bound by residues E381, E395, and N397. 3 residues coordinate Mn(2+): E381, E395, and N397. The region spanning 710–784 is the Biotinyl-binding domain; that stretch reads LEQENDPTQL…EPGDVLGILT (75 aa). Residue K751 is modified to N6-biotinyllysine. The segment at 1159–1208 is disordered; it reads DMEMSSQLSTPSTPATPPTPPYENGKQSKGVGSISDMSNLIENPDKEPTR. In terms of domain architecture, CoA carboxyltransferase N-terminal spans 1539–1887; sequence PTKALEWLQP…KKNTLVPIGP (349 aa). One can recognise a CoA carboxyltransferase C-terminal domain in the interval 1891–2205; sequence PWDRDIVCSP…EEHILKRIAT (315 aa).

The cofactor is biotin. Mg(2+) serves as cofactor. Requires Mn(2+) as cofactor.

The enzyme catalyses hydrogencarbonate + acetyl-CoA + ATP = malonyl-CoA + ADP + phosphate + H(+). It catalyses the reaction N(6)-biotinyl-L-lysyl-[protein] + hydrogencarbonate + ATP = N(6)-carboxybiotinyl-L-lysyl-[protein] + ADP + phosphate + H(+). Its pathway is secondary metabolite biosynthesis. The protein operates within lipid metabolism; malonyl-CoA biosynthesis; malonyl-CoA from acetyl-CoA: step 1/1. Acetyl-CoA carboxylase; part of the gene cluster that mediates the biosynthesis of the dimeric xanthones cryptosporioptides. The pathway begins with the synthesis of atrochrysone thioester by the polyketide synthase dmx-nrPKS. The atrochrysone carboxyl ACP thioesterase dmxR1 then breaks the thioester bond and releases the atrochrysone carboxylic acid from dmx-nrPKS. Atrochrysone carboxylic acid is decarboxylated by the decarboxylase dmxR15, and oxidized by the anthrone oxygenase dmxR16 to yield emodin. Emodin is then reduced to emodin hydroquinone by the oxidoreductase dmxR7. A-ring reduction by the short chain dehydrogenase dmxR18, dehydration by the scytalone dehydratase-like protein dmxR17 and probable spontaneous re-oxidation, results in overall deoxygenation to chrysophanol. Baeyer-Villiger oxidation by the Baeyer-Villiger monooxygenase (BVMO) dmxR6 then yields monodictylactone in equilibrium with monodictyphenone. In the case of the cryptosporioptides biosynthesis, monodictylactone is reduced at C-12 to an alcohol (by the short chain dehydrogenases dmxR12 or dmxR8) and hydroxylated at C-5 by dmxR9, yielding the electron-rich aromatic which could eliminate H(2)O to form the ortho-quinonemethide, followed by tautomerisation to paraquinone and complete the formal reduction to produce the 10-methylgroup. Conjugate addition of C-4a-OH to the resulting paraquinone by the monooxygenase dmxR10 then gives cyclohexadienone, which is then reduced at C-5 by the short chain dehydrogenase dmxR3 to give the dihydroxanthone. The 6,7-epoxide in the cryptosporioptides could be introduced by the cytochrome P450 monooxygenase dmxL3. The highly reducing PKS dmxL2 manufactures butyrate, which is further carboxylated by dmxL1 to form ethylmalonate. It is not yet clear whether the carboxylation occurs while the butyrate is attached to the ACP of dmxL2, but this unusual fungal metabolite could then be esterified to O-5 by the O-acetyltransferase dmxR13. Finally, dimerization performed by dmxR5 gives the observed dimers cryptosporioptides A, B and C as the final products of the pathway. The chain is Acetyl-CoA carboxylase dmxL1 from Cryptosporiopsis sp. (strain 8999).